The chain runs to 105 residues: UPF0235 protein RF_1332 (105 aa).

It belongs to the UPF0235 family.

In Rickettsia felis (strain ATCC VR-1525 / URRWXCal2) (Rickettsia azadi), this protein is UPF0235 protein RF_1332.